The chain runs to 146 residues: Hemoglobin subunit beta-1 (146 aa).

Positions 2 to 146 (HWTAEEKHLL…VAHALARRYH (145 aa)) constitute a Globin domain. Positions 63 and 92 each coordinate heme b.

It belongs to the globin family. There are three forms of hemoglobin in Sphenodon: A, A' and D. Hb A is a tetramer of two alpha-A and two beta-1, Hb A' is a tetramer of two alpha-a and two beta-2, Hb D is a tetramer of two alpha-D and two beta-2.

Functionally, involved in oxygen transport from the lung to the various peripheral tissues. This is Hemoglobin subunit beta-1 (HBB1) from Sphenodon punctatus (Tuatara).